The primary structure comprises 246 residues: Submandibular gland secretory Glx-rich protein CA (246 aa).

The first 18 residues, 1-18, serve as a signal peptide directing secretion; sequence MLVVLLTAALLALSSAQG. The disordered stretch occupies residues 14 to 223; that stretch reads SSAQGTDEEV…SGRPKKPLLP (210 aa). Composition is skewed to low complexity over residues 39-50, 58-71, 81-93, 104-116, 127-141, 150-159, and 178-196; these read PVDSGSDPPSAD, EGES…EPPA, QQEP…QEPP, QQEP…PPAT, QQESTQAENQ, and VESP…QQTN. Tandem repeats lie at residues 67-89, 90-112, 113-135, 136-158, and 159-181. Residues 67–181 are 5 X 23 AA tandem repeats; it reads EEPPATSGSE…QPEEGNVESP (115 aa). The segment covering 197–216 has biased composition (basic and acidic residues); it reads PEEKPPAPKTQEEPQHDSGR.

As to expression, submandibular gland acinar cells.

The protein localises to the secreted. In terms of biological role, GRP proteins have a marked affinity for hydroxyapatite. They may play a role in the formation of the protective acquired pellicle at the saliva-tooth interface. This chain is Submandibular gland secretory Glx-rich protein CA (Grpca), found in Rattus norvegicus (Rat).